Here is a 534-residue protein sequence, read N- to C-terminus: Arginine transporter 1 (534 aa).

The next 6 helical transmembrane spans lie at 35 to 55 (YVLL…YFGW), 99 to 119 (SLFT…GYLL), 126 to 146 (AVAL…AFSG), 154 to 174 (PAFV…LLIV), 182 to 202 (ALIM…PLVL), and 216 to 236 (VCIG…FFFI). N-linked (GlcNAc...) asparagine glycosylation is present at Asn-246. The segment at 261–302 (TAQSSPKAVDSPPCDEGASSRGRLAVSHNTERTAPDDEQEKD) is disordered. The span at 289-302 (NTERTAPDDEQEKD) shows a compositional bias: basic and acidic residues. Transmembrane regions (helical) follow at residues 329-349 (AFTF…WVMA), 365-385 (YTLE…GVVI), 388-408 (IGIM…YVCV), 419-439 (FSVI…YVFV), 451-471 (LIGV…VLYG), and 483-503 (RPVV…LLAM).

Belongs to the SLC43A transporter (TC 2.A.1.44) family.

The protein resides in the cell membrane. The catalysed reaction is L-arginine(in) = L-arginine(out). In terms of biological role, selective L-arginine transporter that is essential for parasite survival and virulence. Does not require other inorganic ions such as sodium, chloride, potassium or calcium. This is Arginine transporter 1 from Toxoplasma gondii (strain ATCC 50611 / Me49).